A 246-amino-acid polypeptide reads, in one-letter code: UDP-N-acetyl-D-mannosaminuronic acid transferase (246 aa).

The protein belongs to the glycosyltransferase 26 family.

The catalysed reaction is UDP-N-acetyl-alpha-D-mannosaminouronate + N-acetyl-alpha-D-glucosaminyl-di-trans,octa-cis-undecaprenyl diphosphate = beta-D-ManNAcA-(1-&gt;4)-alpha-D-GlcNAc-di-trans,octa-cis-undecaprenyl diphosphate + UDP + H(+). Its pathway is bacterial outer membrane biogenesis; enterobacterial common antigen biosynthesis. Its function is as follows. Catalyzes the synthesis of Und-PP-GlcNAc-ManNAcA (Lipid II), the second lipid-linked intermediate involved in enterobacterial common antigen (ECA) synthesis. The polypeptide is UDP-N-acetyl-D-mannosaminuronic acid transferase (Salmonella paratyphi A (strain ATCC 9150 / SARB42)).